A 69-amino-acid chain; its full sequence is Sec-independent protein translocase protein TatA (69 aa).

Residues 1–21 (MFGLGTMEMVIILVIVLVIFG) traverse the membrane as a helical segment. The disordered stretch occupies residues 44-69 (NAEDDAPAEPEVSKPAAAESTEKKDA).

The protein belongs to the TatA/E family. The Tat system comprises two distinct complexes: a TatABC complex, containing multiple copies of TatA, TatB and TatC subunits, and a separate TatA complex, containing only TatA subunits. Substrates initially bind to the TatABC complex, which probably triggers association of the separate TatA complex to form the active translocon.

Its subcellular location is the cell inner membrane. Its function is as follows. Part of the twin-arginine translocation (Tat) system that transports large folded proteins containing a characteristic twin-arginine motif in their signal peptide across membranes. TatA could form the protein-conducting channel of the Tat system. This chain is Sec-independent protein translocase protein TatA, found in Magnetococcus marinus (strain ATCC BAA-1437 / JCM 17883 / MC-1).